We begin with the raw amino-acid sequence, 260 residues long: Indole-3-glycerol phosphate synthase (260 aa).

The protein belongs to the TrpC family.

The enzyme catalyses 1-(2-carboxyphenylamino)-1-deoxy-D-ribulose 5-phosphate + H(+) = (1S,2R)-1-C-(indol-3-yl)glycerol 3-phosphate + CO2 + H2O. Its pathway is amino-acid biosynthesis; L-tryptophan biosynthesis; L-tryptophan from chorismate: step 4/5. The protein is Indole-3-glycerol phosphate synthase of Acetivibrio thermocellus (strain ATCC 27405 / DSM 1237 / JCM 9322 / NBRC 103400 / NCIMB 10682 / NRRL B-4536 / VPI 7372) (Clostridium thermocellum).